The primary structure comprises 471 residues: 3-isopropylmalate dehydratase large subunit (471 aa).

Cys347, Cys407, and Cys410 together coordinate [4Fe-4S] cluster.

This sequence belongs to the aconitase/IPM isomerase family. LeuC type 1 subfamily. In terms of assembly, heterodimer of LeuC and LeuD. [4Fe-4S] cluster is required as a cofactor.

The catalysed reaction is (2R,3S)-3-isopropylmalate = (2S)-2-isopropylmalate. The protein operates within amino-acid biosynthesis; L-leucine biosynthesis; L-leucine from 3-methyl-2-oxobutanoate: step 2/4. Catalyzes the isomerization between 2-isopropylmalate and 3-isopropylmalate, via the formation of 2-isopropylmaleate. This chain is 3-isopropylmalate dehydratase large subunit, found in Prochlorococcus marinus (strain MIT 9211).